The following is a 374-amino-acid chain: Regulator of G-protein signaling 20 (374 aa).

Over residues 1–11 (MPRLSQDNQQG) the composition is skewed to polar residues. Disordered regions lie at residues 1–21 (MPRLSQDNQQGHQKHFSRPSR) and 135–158 (PPGGRLPREVDASAGQSSSIPPMG). The segment covering 12-21 (HQKHFSRPSR) has biased composition (basic residues). The region spanning 248–364 (SFDKLMLTPA…MNSALYKDLL (117 aa)) is the RGS domain.

Forms a complex with G(alpha)z/i2 subunits and mu-opioid receptors; the formation of this complex results in mu-opioid receptor desensitization. Interacts with OPRM1. Fatty acylated. Heavily palmitoylated in the cysteine string motif. In terms of processing, N- and O-glycosylated in synapsomal membranes. Post-translationally, serine phosphorylated in synapsomal membranes. Sumoylated with SUMO1 and SUMO2 in synaptosomes. The sumoylated forms act as a scaffold for sequestering mu-opioid receptor-activated G(alpha) subunits. In terms of tissue distribution, retinal-specific. Expressed throughout the retina, including photoreceptors.

It is found in the membrane. The protein localises to the nucleus. Its subcellular location is the cytoplasm. In terms of biological role, inhibits signal transduction by increasing the GTPase activity of G protein alpha subunits thereby driving them into their inactive GDP-bound form. Binds selectively to G(z)-alpha and G(alpha)-i2 subunits, accelerates their GTPase activity and regulates their signaling activities. The G(z)-alpha activity is inhibited by the phosphorylation and palmitoylation of the G-protein. Negatively regulates mu-opioid receptor-mediated activation of the G-proteins. The polypeptide is Regulator of G-protein signaling 20 (RGS20) (Bos taurus (Bovine)).